The chain runs to 196 residues: 3-isopropylmalate dehydratase small subunit (196 aa).

This sequence belongs to the LeuD family. LeuD type 1 subfamily. Heterodimer of LeuC and LeuD.

It carries out the reaction (2R,3S)-3-isopropylmalate = (2S)-2-isopropylmalate. It functions in the pathway amino-acid biosynthesis; L-leucine biosynthesis; L-leucine from 3-methyl-2-oxobutanoate: step 2/4. Catalyzes the isomerization between 2-isopropylmalate and 3-isopropylmalate, via the formation of 2-isopropylmaleate. This Streptococcus thermophilus (strain CNRZ 1066) protein is 3-isopropylmalate dehydratase small subunit.